The following is a 70-amino-acid chain: ATP synthase subunit epsilon, mitochondrial (70 aa).

The protein belongs to the eukaryotic ATPase epsilon family. As to quaternary structure, F-type ATPases have 2 components, CF(1) - the catalytic core - and CF(0) - the membrane proton channel. CF(1) has five subunits: alpha(3), beta(3), gamma(1), delta(1), epsilon(1). CF(0) has three main subunits: a, b and c.

It is found in the mitochondrion. It localises to the mitochondrion inner membrane. Its function is as follows. Mitochondrial membrane ATP synthase (F(1)F(0) ATP synthase or Complex V) produces ATP from ADP in the presence of a proton gradient across the membrane which is generated by electron transport complexes of the respiratory chain. F-type ATPases consist of two structural domains, F(1) - containing the extramembraneous catalytic core, and F(0) - containing the membrane proton channel, linked together by a central stalk and a peripheral stalk. During catalysis, ATP synthesis in the catalytic domain of F(1) is coupled via a rotary mechanism of the central stalk subunits to proton translocation. Part of the complex F(1) domain and of the central stalk which is part of the complex rotary element. Rotation of the central stalk against the surrounding alpha(3)beta(3) subunits leads to hydrolysis of ATP in three separate catalytic sites on the beta subunits. The sequence is that of ATP synthase subunit epsilon, mitochondrial from Zea mays (Maize).